Here is a 406-residue protein sequence, read N- to C-terminus: Cysteine desulfurase (406 aa).

K226 bears the N6-(pyridoxal phosphate)lysine mark. C364 (cysteine persulfide intermediate) is an active-site residue.

It belongs to the class-V pyridoxal-phosphate-dependent aminotransferase family. Csd subfamily. As to quaternary structure, homodimer. Interacts with SufE and the SufBCD complex composed of SufB, SufC and SufD. The interaction with SufE is required to mediate the direct transfer of the sulfur atom from the S-sulfanylcysteine. The cofactor is pyridoxal 5'-phosphate.

It localises to the cytoplasm. The enzyme catalyses (sulfur carrier)-H + L-cysteine = (sulfur carrier)-SH + L-alanine. It carries out the reaction L-selenocysteine + AH2 = hydrogenselenide + L-alanine + A + H(+). It functions in the pathway cofactor biosynthesis; iron-sulfur cluster biosynthesis. Its function is as follows. Cysteine desulfurases mobilize the sulfur from L-cysteine to yield L-alanine, an essential step in sulfur metabolism for biosynthesis of a variety of sulfur-containing biomolecules. Component of the suf operon, which is activated and required under specific conditions such as oxidative stress and iron limitation. Acts as a potent selenocysteine lyase in vitro, that mobilizes selenium from L-selenocysteine. Selenocysteine lyase activity is however unsure in vivo. In Escherichia coli O7:K1 (strain IAI39 / ExPEC), this protein is Cysteine desulfurase.